Reading from the N-terminus, the 356-residue chain is UDP-N-acetylglucosamine--N-acetylmuramyl-(pentapeptide) pyrophosphoryl-undecaprenol N-acetylglucosamine transferase (356 aa).

UDP-N-acetyl-alpha-D-glucosamine contacts are provided by residues 14 to 16, asparagine 126, arginine 162, serine 190, isoleucine 244, and glutamine 289; that span reads TGG.

It belongs to the glycosyltransferase 28 family. MurG subfamily.

Its subcellular location is the cell inner membrane. The catalysed reaction is di-trans,octa-cis-undecaprenyl diphospho-N-acetyl-alpha-D-muramoyl-L-alanyl-D-glutamyl-meso-2,6-diaminopimeloyl-D-alanyl-D-alanine + UDP-N-acetyl-alpha-D-glucosamine = di-trans,octa-cis-undecaprenyl diphospho-[N-acetyl-alpha-D-glucosaminyl-(1-&gt;4)]-N-acetyl-alpha-D-muramoyl-L-alanyl-D-glutamyl-meso-2,6-diaminopimeloyl-D-alanyl-D-alanine + UDP + H(+). It participates in cell wall biogenesis; peptidoglycan biosynthesis. Its function is as follows. Cell wall formation. Catalyzes the transfer of a GlcNAc subunit on undecaprenyl-pyrophosphoryl-MurNAc-pentapeptide (lipid intermediate I) to form undecaprenyl-pyrophosphoryl-MurNAc-(pentapeptide)GlcNAc (lipid intermediate II). In Cupriavidus pinatubonensis (strain JMP 134 / LMG 1197) (Cupriavidus necator (strain JMP 134)), this protein is UDP-N-acetylglucosamine--N-acetylmuramyl-(pentapeptide) pyrophosphoryl-undecaprenol N-acetylglucosamine transferase.